Reading from the N-terminus, the 127-residue chain is MORF4 family-associated protein 1 (127 aa).

A disordered region spans residues 76 to 97; sequence ESALNHLQNPDDGAEGRGTKRC. Residues 92–126 are a coiled coil; that stretch reads RGTKRCEKAEEKAKEIAKMAEMLVELVRRIEKSES.

This sequence belongs to the MORF4 family-associated protein family. Found in a complex composed of MORF4L1, MRFAP1 and RB1. Interacts via its N-terminus with MORF4L1. Interacts with CSTB and MORF4L2.

Its subcellular location is the nucleus. It is found in the cytoplasm. The protein resides in the perinuclear region. This Bos taurus (Bovine) protein is MORF4 family-associated protein 1.